The sequence spans 187 residues: MTKVKDEPRASVEGGCGVADGDGGAAEIGGTGSVEKSINEVRSTEIQTAEPTVPPNQLTIFFGGSVTVFDGLPSEKVQEILRIAAKAMETKNSTSISPVSSPALNRAPSFSSTSNVASPAAQPFPIQPISFCRSTADLPIARRHSLQRFLEKRRDRLVNKNPYPTSDFKKTDVPTGNVSIKEEFPTA.

Basic and acidic residues predominate over residues 1-10 (MTKVKDEPRA). Residues 1–50 (MTKVKDEPRASVEGGCGVADGDGGAAEIGGTGSVEKSINEVRSTEIQTAE) are disordered. Residues 14-32 (GGCGVADGDGGAAEIGGTG) are compositionally biased toward gly residues. Residues 51–86 (PTVPPNQLTIFFGGSVTVFDGLPSEKVQEILRIAAK) enclose the Tify domain. The Jas signature appears at 139-163 (PIARRHSLQRFLEKRRDRLVNKNPY). The short motif at 141-148 (ARRHSLQR) is the Nuclear localization signal element. Residues 152-187 (KRRDRLVNKNPYPTSDFKKTDVPTGNVSIKEEFPTA) are disordered.

Belongs to the TIFY/JAZ family. In terms of assembly, interacts with MYC2, AFPH2/NINJA, TIFY10A/JAZ1, TIFY10B/JAZ2, TIFY11A/JAZ5, TIFY11B/JAZ6, TIFY5A/JAZ8 and TIFY9/JAZ10. (Microbial infection) Interacts with the pathogenic Pseudomonas syringae HopZ1a protein. In terms of processing, (Microbial infection) Acetylated by Pseudomonas syringae HopZ1a. Post-translationally, ubiquitinated. Targeted for degradation by the SCF(COI1) E3 ubiquitin ligase-proteasome pathway during jasmonate signaling.

The protein localises to the nucleus. Repressor of jasmonate responses. This Arabidopsis thaliana (Mouse-ear cress) protein is Protein TIFY 3B.